A 35-amino-acid polypeptide reads, in one-letter code: Entry-fusion complex protein OPG076 (35 aa).

Residues 2–22 (LVVIMFFIAFAFCSWLSYSYL) form a helical membrane-spanning segment. Over 23–35 (RPYISTKELNKSR) the chain is Virion surface.

The protein belongs to the orthopoxvirus OPG076 family. In terms of assembly, component of the entry fusion complex (EFC) composed of OPG053, OPG076, OPG086, OPG094, OPG095, OPG099, OPG107, OPG143, OPG104, OPG147 and OPG155. Except for OPG095 and OPG053, each of the EFC proteins is required for assembly or stability of the complex. Unglycosylated because produced in viral factories instead of the classic ER -Golgi route.

The protein localises to the virion membrane. Functionally, component of the entry fusion complex (EFC), which consists of 11 proteins. During cell infection, this complex mediates entry of the virion core into the host cytoplasm by a two-step mechanism consisting of lipid mixing of the viral and cellular membranes and subsequent pore formation. The sequence is that of Entry-fusion complex protein OPG076 (OPG076) from Vaccinia virus (strain Copenhagen) (VACV).